A 252-amino-acid chain; its full sequence is 5'-nucleotidase SurE (252 aa).

Residues Asp-8, Asp-9, Ser-39, and Asn-95 each coordinate a divalent metal cation.

It belongs to the SurE nucleotidase family. The cofactor is a divalent metal cation.

It is found in the cytoplasm. The enzyme catalyses a ribonucleoside 5'-phosphate + H2O = a ribonucleoside + phosphate. Nucleotidase that shows phosphatase activity on nucleoside 5'-monophosphates. This chain is 5'-nucleotidase SurE, found in Clostridium botulinum (strain Loch Maree / Type A3).